We begin with the raw amino-acid sequence, 148 residues long: Putative pre-16S rRNA nuclease (148 aa).

The protein belongs to the YqgF nuclease family.

It is found in the cytoplasm. In terms of biological role, could be a nuclease involved in processing of the 5'-end of pre-16S rRNA. This chain is Putative pre-16S rRNA nuclease, found in Chlamydia trachomatis serovar A (strain ATCC VR-571B / DSM 19440 / HAR-13).